Consider the following 367-residue polypeptide: Protein U67 (367 aa).

Belongs to the herpesviridae UL95 family.

This is Protein U67 from Elephantid herpesvirus 1 (isolate Asian elephant/Berlin/Kiba/1998) (EIHV-1).